Reading from the N-terminus, the 82-residue chain is Putative Fe(2+) transport protein A (82 aa).

Belongs to the FeoA family.

Its function is as follows. Might be involved in Fe(2+) ion uptake. The chain is Putative Fe(2+) transport protein A from Methanocaldococcus jannaschii (strain ATCC 43067 / DSM 2661 / JAL-1 / JCM 10045 / NBRC 100440) (Methanococcus jannaschii).